Reading from the N-terminus, the 494-residue chain is UDP-N-acetylmuramate--L-alanine ligase (494 aa).

Position 140–146 (140–146) interacts with ATP; the sequence is GTHGKTT.

It belongs to the MurCDEF family.

It localises to the cytoplasm. It carries out the reaction UDP-N-acetyl-alpha-D-muramate + L-alanine + ATP = UDP-N-acetyl-alpha-D-muramoyl-L-alanine + ADP + phosphate + H(+). Its pathway is cell wall biogenesis; peptidoglycan biosynthesis. Functionally, cell wall formation. This Trichormus variabilis (strain ATCC 29413 / PCC 7937) (Anabaena variabilis) protein is UDP-N-acetylmuramate--L-alanine ligase.